The chain runs to 272 residues: Granaticin polyketide synthase putative ketoacyl reductase 1 (272 aa).

21 to 45 contacts NAD(+); sequence LVTGATSGIGLAIARRLAALGARTF. Serine 155 serves as a coordination point for substrate. Catalysis depends on tyrosine 168, which acts as the Proton acceptor.

The protein belongs to the short-chain dehydrogenases/reductases (SDR) family.

It functions in the pathway antibiotic biosynthesis; granaticin biosynthesis. In Streptomyces violaceoruber, this protein is Granaticin polyketide synthase putative ketoacyl reductase 1 (gra-orf5).